We begin with the raw amino-acid sequence, 224 residues long: ATP phosphoribosyltransferase (224 aa).

It belongs to the ATP phosphoribosyltransferase family. Short subfamily. Heteromultimer composed of HisG and HisZ subunits.

It is found in the cytoplasm. It catalyses the reaction 1-(5-phospho-beta-D-ribosyl)-ATP + diphosphate = 5-phospho-alpha-D-ribose 1-diphosphate + ATP. Its pathway is amino-acid biosynthesis; L-histidine biosynthesis; L-histidine from 5-phospho-alpha-D-ribose 1-diphosphate: step 1/9. Catalyzes the condensation of ATP and 5-phosphoribose 1-diphosphate to form N'-(5'-phosphoribosyl)-ATP (PR-ATP). Has a crucial role in the pathway because the rate of histidine biosynthesis seems to be controlled primarily by regulation of HisG enzymatic activity. In Cupriavidus pinatubonensis (strain JMP 134 / LMG 1197) (Cupriavidus necator (strain JMP 134)), this protein is ATP phosphoribosyltransferase.